Here is a 321-residue protein sequence, read N- to C-terminus: CRISPR-associated endonuclease Cas1 2 (321 aa).

Mn(2+) contacts are provided by glutamate 150, histidine 213, and glutamate 228.

Belongs to the CRISPR-associated endonuclease Cas1 family. Homodimer, forms a heterotetramer with a Cas2 homodimer. Mg(2+) is required as a cofactor. The cofactor is Mn(2+).

In terms of biological role, CRISPR (clustered regularly interspaced short palindromic repeat), is an adaptive immune system that provides protection against mobile genetic elements (viruses, transposable elements and conjugative plasmids). CRISPR clusters contain spacers, sequences complementary to antecedent mobile elements, and target invading nucleic acids. CRISPR clusters are transcribed and processed into CRISPR RNA (crRNA). Acts as a dsDNA endonuclease. Involved in the integration of spacer DNA into the CRISPR cassette. This is CRISPR-associated endonuclease Cas1 2 from Moorella thermoacetica (strain ATCC 39073 / JCM 9320).